Reading from the N-terminus, the 1161-residue chain is Auxin response factor 19 (1161 aa).

Residues 1–20 are disordered; it reads MMKQAQQQPPPPPASSAATT. Positions 154 to 256 form a DNA-binding region, TF-B3; it reads FCKTLTASDT…QLLLGIRRAN (103 aa). Positions 573–598 are disordered; it reads NQMQQQHASSTQGQQPATSQPLLLPQ. Residues 1027–1111 form the PB1 domain; sequence RTFTKVYKRG…KCIRILSPQE (85 aa).

The protein belongs to the ARF family. As to quaternary structure, homodimers and heterodimers. Expressed in roots, culms, leaves and young panicles.

It localises to the nucleus. Its function is as follows. Auxin response factors (ARFs) are transcriptional factors that bind specifically to the DNA sequence 5'-TGTCTC-3' found in the auxin-responsive promoter elements (AuxREs). The polypeptide is Auxin response factor 19 (ARF19) (Oryza sativa subsp. japonica (Rice)).